A 265-amino-acid polypeptide reads, in one-letter code: Glycosylphosphatidylinositol anchor biosynthesis protein 11 (265 aa).

Helical transmembrane passes span 49-69 (LLVV…SGLT) and 79-99 (GFLT…INLL). Residues Asn111 and Asn112 are each glycosylated (N-linked (GlcNAc...) asparagine). 4 helical membrane-spanning segments follow: residues 137–157 (IFVS…MGAP), 166–186 (LYLS…LSNL), 209–229 (ILSS…PIPL), and 240–260 (ITLL…SLIV).

Belongs to the PIGF family.

It localises to the endoplasmic reticulum membrane. The protein operates within glycolipid biosynthesis; glycosylphosphatidylinositol-anchor biosynthesis. Acts in the GPI biosynthetic pathway between GlcNAc-PI synthesis and GPI transfer to protein. The polypeptide is Glycosylphosphatidylinositol anchor biosynthesis protein 11 (GPI11) (Candida albicans (strain SC5314 / ATCC MYA-2876) (Yeast)).